Consider the following 605-residue polypeptide: uncharacterized protein (605 aa).

2 disordered regions span residues 10–78 (RRGG…FPPA) and 216–248 (RAPD…VRNP). A compositionally biased stretch (low complexity) spans 20-48 (AGGRPAAGGRPAAGGRPAAGSRAAAGAAG). Residues 220-233 (CPSPRTPMVKPPFR) are compositionally biased toward pro residues.

This is an uncharacterized protein from Dryophytes versicolor (chameleon treefrog).